The primary structure comprises 181 residues: Protein Syd (181 aa).

The protein belongs to the Syd family.

It localises to the cell inner membrane. Interacts with the SecY protein in vivo. May bind preferentially to an uncomplexed state of SecY, thus functioning either as a chelating agent for excess SecY in the cell or as a regulatory factor that negatively controls the translocase function. The chain is Protein Syd from Cronobacter sakazakii (strain ATCC BAA-894) (Enterobacter sakazakii).